Consider the following 825-residue polypeptide: NT-3 growth factor receptor (825 aa).

A signal peptide spans methionine 1–alanine 31. 2 cysteine pairs are disulfide-bonded: cysteine 32-cysteine 38 and cysteine 36-cysteine 45. The Extracellular portion of the chain corresponds to cysteine 32 to threonine 429. 3 N-linked (GlcNAc...) asparagine glycosylation sites follow: asparagine 68, asparagine 72, and asparagine 79. LRR repeat units follow at residues glycine 104–lysine 125 and histidine 128–threonine 149. 2 N-linked (GlcNAc...) asparagine glycosylation sites follow: asparagine 133 and asparagine 163. Residues asparagine 160–leucine 209 form the LRRCT domain. 2 disulfides stabilise this stretch: cysteine 164–cysteine 189 and cysteine 166–cysteine 207. Residues asparagine 203, asparagine 218, asparagine 232, asparagine 259, asparagine 267, asparagine 272, and asparagine 294 are each glycosylated (N-linked (GlcNAc...) asparagine). Ig-like C2-type domains are found at residues proline 210–threonine 300 and serine 309–asparagine 382. A disulfide bridge links cysteine 231 with cysteine 284. A disulfide bond links cysteine 320 and cysteine 362. 2 N-linked (GlcNAc...) asparagine glycosylation sites follow: asparagine 375 and asparagine 388. Residues phenylalanine 430–isoleucine 453 form a helical membrane-spanning segment. Over asparagine 454–glycine 825 the chain is Cytoplasmic. Phosphoserine is present on serine 493. Tyrosine 516 bears the Phosphotyrosine; by autocatalysis mark. In terms of domain architecture, Protein kinase spans isoleucine 538 to glycine 825. ATP is bound by residues leucine 544 to valine 552 and lysine 572. Aspartate 679 acts as the Proton acceptor in catalysis. Residues tyrosine 705, tyrosine 709, and tyrosine 710 each carry the phosphotyrosine; by autocatalysis modification.

The protein belongs to the protein kinase superfamily. Tyr protein kinase family. Insulin receptor subfamily. Exists in a dynamic equilibrium between monomeric (low affinity) and dimeric (high affinity) structures. Binds SH2B2. Interacts with SQSTM1 and KIDINS220. Interacts with PTPRS. Interacts with MAPK8IP3/JIP3. In terms of processing, ligand-mediated auto-phosphorylation.

It is found in the membrane. It catalyses the reaction L-tyrosyl-[protein] + ATP = O-phospho-L-tyrosyl-[protein] + ADP + H(+). In terms of biological role, receptor tyrosine kinase involved in nervous system and probably heart development. Upon binding of its ligand NTF3/neurotrophin-3, NTRK3 autophosphorylates and activates different signaling pathways, including the phosphatidylinositol 3-kinase/AKT and the MAPK pathways, that control cell survival and differentiation. The polypeptide is NT-3 growth factor receptor (NTRK3) (Pan troglodytes (Chimpanzee)).